The following is a 401-amino-acid chain: Tryptophan synthase beta chain (401 aa).

At lysine 92 the chain carries N6-(pyridoxal phosphate)lysine.

Belongs to the TrpB family. In terms of assembly, tetramer of two alpha and two beta chains. It depends on pyridoxal 5'-phosphate as a cofactor.

The enzyme catalyses (1S,2R)-1-C-(indol-3-yl)glycerol 3-phosphate + L-serine = D-glyceraldehyde 3-phosphate + L-tryptophan + H2O. It participates in amino-acid biosynthesis; L-tryptophan biosynthesis; L-tryptophan from chorismate: step 5/5. In terms of biological role, the beta subunit is responsible for the synthesis of L-tryptophan from indole and L-serine. The protein is Tryptophan synthase beta chain of Vesicomyosocius okutanii subsp. Calyptogena okutanii (strain HA).